Reading from the N-terminus, the 92-residue chain is RNA-binding protein Hfq (92 aa).

Positions 9–68 (DPFLNALRRERVPVSVYLVNGIKLQGTIESFDQFVVLLRNTVSQMVYKHAISTVVPARNV) constitute a Sm domain. The tract at residues 73–92 (GGGYVQSNEGNQAEDDDVEQ) is disordered.

The protein belongs to the Hfq family. As to quaternary structure, homohexamer.

RNA chaperone that binds small regulatory RNA (sRNAs) and mRNAs to facilitate mRNA translational regulation in response to envelope stress, environmental stress and changes in metabolite concentrations. Also binds with high specificity to tRNAs. The polypeptide is RNA-binding protein Hfq (Xanthomonas axonopodis pv. citri (strain 306)).